Consider the following 2203-residue polypeptide: Voltage-dependent L-type calcium channel subunit alpha-1D (2203 aa).

Disordered stretches follow at residues 1 to 51 and 64 to 100; these read MMMM…QTVL and KAAQ…SSNS. Over 1-126 the chain is Cytoplasmic; that stretch reads MMMMMMMKKM…RACISIVDWK (126 aa). The span at 38-51 shows a compositional bias: polar residues; the sequence is GPTSQPNSSKQTVL. Residues 82 to 93 are compositionally biased toward basic residues; that stretch reads QRKRQQYAKSKK. The I repeat unit spans residues 112–408; the sequence is NNPIRRACIS…NLVLGVLSGE (297 aa). A helical membrane pass occupies residues 127–145; it reads PFDIFILLAIFANCVALAI. The Extracellular portion of the chain corresponds to 146–163; sequence YIPFPEDDSNSTNHNLEK. N-linked (GlcNAc...) asparagine glycosylation is present at N155. Residues 164–183 traverse the membrane as a helical segment; sequence VEYAFLIIFTVETFLKIIAS. Over 184-195 the chain is Cytoplasmic; sequence GLLLHPNASVRN. A helical transmembrane segment spans residues 196 to 214; it reads GWNLLDFVIVIVGLFSVIL. The Extracellular segment spans residues 215-235; it reads EQLTKETEGGNHSSGKSGGFD. N225 is a glycosylation site (N-linked (GlcNAc...) asparagine). The helical transmembrane segment at 236-254 threads the bilayer; the sequence is VKALRAFRVLRPLRLVSGV. At 255 to 273 the chain is on the cytoplasmic side; that stretch reads PSLQVVLNSIIKAMVPLLH. The helical transmembrane segment at 274-293 threads the bilayer; it reads IALLVLFVIIIYAIIGLELF. Residues 294–381 lie on the Extracellular side of the membrane; that stretch reads IGKMHKTCFF…WVNDAIGWEW (88 aa). Residue N329 is glycosylated (N-linked (GlcNAc...) asparagine). E364 provides a ligand contact to Ca(2+). Residues 382-406 traverse the membrane as a helical segment; the sequence is PWVYFVSLIILGSFFVLNLVLGVLS. At 407–582 the chain is on the cytoplasmic side; that stretch reads GEFSKEREKA…RRCRAAVKSV (176 aa). A binding to the beta subunit region spans residues 429 to 446; that stretch reads QQLEEDLKGYLDWITQAE. Residues 449-480 are disordered; the sequence is DPENEEEGGEEGKRNTSMPTSETESVNTENVS. Residues 463-479 are compositionally biased toward polar residues; that stretch reads NTSMPTSETESVNTENV. An II repeat occupies 528–774; the sequence is EALCVCRCSL…DWNAVMYDGI (247 aa). The chain crosses the membrane as a helical span at residues 583–602; that stretch reads TFYWLVIVLVFLNTLTISSE. Topologically, residues 603 to 617 are extracellular; that stretch reads HYNQPDWLTQIQDIA. The helical transmembrane segment at 618–636 threads the bilayer; sequence NKVLLALFTCEMLVKMYSL. The Cytoplasmic portion of the chain corresponds to 637–644; sequence GLQAYFVS. The helical transmembrane segment at 645–663 threads the bilayer; that stretch reads LFNRFDCFVVCGGITETIL. Over 664–673 the chain is Extracellular; it reads VELELMSPLG. A helical transmembrane segment spans residues 674–692; that stretch reads VSVFRCVRLLRIFKVTRHW. Topologically, residues 693-711 are cytoplasmic; that stretch reads TSLSNLVASLLNSMKSIAS. A helical transmembrane segment spans residues 712-732; sequence LLLLLFLFIIIFSLLGMQLFG. At 733-786 the chain is on the extracellular side; the sequence is GKFNFDETQTKRSTFDNFPQALLTVFQILTGEDWNAVMYDGIMAYGGPSSSGMI. A Ca(2+)-binding site is contributed by E764. A helical membrane pass occupies residues 787–811; sequence VCIYFIILFICGNYILLKLFLAIAV. Topologically, residues 812–945 are cytoplasmic; it reads DNLADAESLN…VGCHKLINHH (134 aa). Positions 822–909 are disordered; that stretch reads TAQKEEAEEK…AGPRPRRISE (88 aa). Basic and acidic residues predominate over residues 824–849; sequence QKEEAEEKERKKIARKESLENKKNNK. Over residues 850–861 the composition is skewed to polar residues; it reads PEVNQIANSDNK. Positions 884–897 are enriched in acidic residues; it reads VGEEEEEEEEDEPE. Residues 892 to 1174 form an III repeat; it reads EEDEPEVPAG…LLYKAIDSNG (283 aa). A helical transmembrane segment spans residues 946 to 964; it reads IFTNLILVFIMLSSAALAA. The Extracellular portion of the chain corresponds to 965 to 980; it reads EDPIRSHSFRNTILGY. The helical transmembrane segment at 981 to 1000 threads the bilayer; that stretch reads FDYAFTAIFTVEILLKMTTF. At 1001-1012 the chain is on the cytoplasmic side; sequence GAFLHKGAFCRN. The chain crosses the membrane as a helical span at residues 1013 to 1031; sequence YFNLLDMLVVGVSLVSFGI. At 1032–1037 the chain is on the extracellular side; that stretch reads QSSAIS. A helical membrane pass occupies residues 1038-1057; the sequence is VVKILRVLRVLRPLRAINRA. Residues 1058-1076 lie on the Cytoplasmic side of the membrane; it reads KGLKHVVQCVFVAIRTIGN. The helical transmembrane segment at 1077–1096 threads the bilayer; the sequence is IMIVTTLLQFMFACIGVQLF. Residues 1097–1186 are Extracellular-facing; sequence KGKFYRCTDE…VGPVYNYRVE (90 aa). The tract at residues 1134–1224 is dihydropyridine binding; the sequence is RIWQNSDFNF…QEQGEKEYKN (91 aa). E1160 is a binding site for Ca(2+). The chain crosses the membrane as a helical span at residues 1187-1207; that stretch reads ISIFFIIYIIIVAFFMMNIFV. The Cytoplasmic portion of the chain corresponds to 1208 to 1264; that stretch reads GFVIVTFQEQGEKEYKNCELDKNQRQCVEYALKARPLRRYIPKNPYQYKFWYVVNSS. An IV repeat occupies 1211–1486; that stretch reads IVTFQEQGEK…YTCGSNFAIV (276 aa). A helical transmembrane segment spans residues 1265 to 1283; the sequence is PFEYMMFVLIMLNTLCLAM. Residues 1284–1298 lie on the Extracellular side of the membrane; sequence QHYEQSKMFNDAMDI. Residues 1299–1318 traverse the membrane as a helical segment; sequence LNMVFTGVFTVEMVLKVIAF. The Cytoplasmic segment spans residues 1319–1325; sequence KPKGYFS. The chain crosses the membrane as a helical span at residues 1326 to 1347; it reads DAWNTFDSLIVIGSIIDVALSE. At 1348 to 1357 the chain is on the extracellular side; that stretch reads ADNSEESNRI. The helical transmembrane segment at 1358–1377 threads the bilayer; it reads SITFFRLFRVMRLVKLLSRG. The Cytoplasmic portion of the chain corresponds to 1378–1396; sequence EGIRTLLWTFIKSFQALPY. The helical transmembrane segment at 1397 to 1416 threads the bilayer; sequence VALLIAMLFFIYAVIGMQMF. Topologically, residues 1417–1483 are extracellular; the sequence is GKVAMRDNNQ…GEEYTCGSNF (67 aa). The tract at residues 1464-1530 is dihydropyridine binding; that stretch reads LCDPDSDYNP…LGPHHLDEFK (67 aa). Residues 1476 to 1519 form a phenylalkylamine binding region; it reads EYTCGSNFAIVYFISFYMLCAFLIINLFVAVIMDNFDYLTRDWS. Residues 1484 to 1508 form a helical membrane-spanning segment; that stretch reads AIVYFISFYMLCAFLIINLFVAVIM. Residues 1509-2203 lie on the Cytoplasmic side of the membrane; that stretch reads DNFDYLTRDW…ADEMICITTL (695 aa). 4 disordered regions span residues 1734-1766, 1795-1816, 1920-1963, and 2176-2195; these read NHVN…PASD, TSTN…KRPS, FERP…HRRS, and GPGY…DLAD. Residues 1795–1806 show a composition bias toward polar residues; the sequence is TSTNANLNNANM. Acidic residues predominate over residues 2180–2195; it reads SDEEPDPGREEEDLAD.

Belongs to the calcium channel alpha-1 subunit (TC 1.A.1.11) family. CACNA1D subfamily. Voltage-dependent calcium channels are multisubunit complexes, consisting of alpha-1, alpha-2, beta and delta subunits in a 1:1:1:1 ratio. The channel activity is directed by the pore-forming and voltage-sensitive alpha-1 subunit. In many cases, this subunit is sufficient to generate voltage-sensitive calcium channel activity. The auxiliary subunits beta and alpha-2/delta linked by a disulfide bridge regulate the channel activity. Interacts with CABP1 and CABP4, resulting in a near elimination of calcium-dependent inactivation of the channel. Interacts with RIMBP2. Expressed in brain, pancreatic islets and B-lymphocytes.

Its subcellular location is the membrane. It carries out the reaction Ca(2+)(in) = Ca(2+)(out). Its function is as follows. Voltage-sensitive calcium channels (VSCC) mediate the entry of calcium ions into excitable cells and are also involved in a variety of calcium-dependent processes, including muscle contraction, hormone or neurotransmitter release, gene expression, cell motility, cell division and cell death. The isoform alpha-1D gives rise to L-type calcium currents. Long-lasting (L-type) calcium channels belong to the 'high-voltage activated' (HVA) group. They are blocked by dihydropyridines (DHP), phenylalkylamines, and by benzothiazepines. Voltage-sensitive calcium channels (VSCC) mediate the entry of calcium ions into excitable cells and are also involved in a variety of calcium-dependent processes, including muscle contraction, hormone or neurotransmitter release, gene expression, cell motility, cell division and cell death. The isoform alpha-1D gives rise to L-type calcium currents. This Rattus norvegicus (Rat) protein is Voltage-dependent L-type calcium channel subunit alpha-1D (Cacna1d).